A 207-amino-acid polypeptide reads, in one-letter code: BTB/POZ domain-containing protein At1g01640 (207 aa).

The 71-residue stretch at 24–94 folds into the BTB domain; the sequence is TDVLVKPGEE…LYSGNLKAPY (71 aa).

In terms of assembly, interacts with CUL3A.

Its pathway is protein modification; protein ubiquitination. Functionally, may act as a substrate-specific adapter of an E3 ubiquitin-protein ligase complex (CUL3-RBX1-BTB) which mediates the ubiquitination and subsequent proteasomal degradation of target proteins. This is BTB/POZ domain-containing protein At1g01640 from Arabidopsis thaliana (Mouse-ear cress).